The following is a 195-amino-acid chain: Probable GTP-binding protein EngB (195 aa).

One can recognise an EngB-type G domain in the interval 24–195; it reads ELPEIALAGR…EAWDAILEKL (172 aa). GTP-binding positions include 32–39, 59–63, 77–80, 144–147, and 176–178; these read GRSNVGKS, GKTQL, DVPG, TKAD, and FSS. The Mg(2+) site is built by serine 39 and threonine 61.

The protein belongs to the TRAFAC class TrmE-Era-EngA-EngB-Septin-like GTPase superfamily. EngB GTPase family. The cofactor is Mg(2+).

In terms of biological role, necessary for normal cell division and for the maintenance of normal septation. The sequence is that of Probable GTP-binding protein EngB from Streptococcus pneumoniae serotype 4 (strain ATCC BAA-334 / TIGR4).